A 245-amino-acid polypeptide reads, in one-letter code: Lytic switch protein BZLF1 (245 aa).

Residues 1-167 (MMDPNSTSED…RTRKPLQPES (167 aa)) are transactivation. 2 positions are modified to phosphothreonine: T14 and T159. Residues 145 to 167 (GAPQPAPAAAPARRTRKPLQPES) form a disordered region. The short motif at 157-194 (RRTRKPLQPESLEECDSELEIKRYKNRVASRKCRAKFK) is the Bipartite nuclear localization signal element. Residues S167, S173, and S186 each carry the phosphoserine modification. The segment at 178–195 (KRYKNRVASRKCRAKFKH) is basic motif. Residues 178–228 (KRYKNRVASRKCRAKFKHLLQHYREVASAKSSENDRLRLLLKQMCPSLDVD) enclose the bZIP domain. The segment at 196-228 (LLQHYREVASAKSSENDRLRLLLKQMCPSLDVD) is leucine-zipper. The tract at residues 229-245 (SIIPRTPDVLHEDLLNF) is accessory activation domain.

This sequence belongs to the bZIP family. In terms of assembly, homodimer. Interacts (via b-ZIP domain) with the DNA polymerase processivity factor BMRF1 (via N-terminus); this interaction may inhibit BZLF1-induced transcription of the BMRF1 promoter. Interacts with human UBN1, CRTC2 and RACK1. Interacts (via N-terminus) with human PAX5 (via N-terminus); this interaction inhibits BZLF1-mediated lytic viral reactivation. Interacts (via leucine-zipper domain) with host CEBPA; this interaction induces G1 host cell cycle arrest. Interacts (via C-terminus) with host TP53BP1 (via C-terminus); this interaction is involved in the activation of the viral lytic cycle. Interacts with host chromatin-remodeling ATPase INO80; this interaction participates to the activation of early lytic viral genes by BZLF1. Interacts with host regulator of chromatin SMARCA5/hSNF2H; this interaction participates to the activation of early lytic viral genes by BZLF1. Interacts with host PLSCR1/Phospholipid scramblase 1; this interaction negatively regulates the transcriptional regulatory activity of BZLF1 by preventing the formation of the BZLF1-CBP complex.

It is found in the host nucleus. Functionally, transcription factor that acts as a molecular switch to induce the transition from the latent to the lytic or productive phase of the virus cycle. Mediates the switch from the latent to the lytic cycle of infection in cells containing a highly methylated viral genome. Probably binds to silenced chromatin and recruits host chromatin-remodeling enzymes. Regulates this switch by binding to 2 types of ZEBRA response elements (ZREs): the CpG-free AP-1 like elements (latency) and the methylated CpG-containing elements (lytic replication). Activates preferentially the methylated forms of the viral lytic R (BRLF1) and Na (BRRF1) gene promoters, the latters being the first genes activated during Z-mediated reactivation in latently infected cells. BZLF1 and BRLF1 act together to trigger lytic replication. Also binds the lytic origin of replication, oriLyt. Induces G1 cell cycle arrest by stabilizing the host CCAAT/enhancer binding protein CEBPA. This function is important because the lytic cycle preferentially takes place in host cells arrested in G1. This chain is Lytic switch protein BZLF1, found in Homo sapiens (Human).